Here is a 258-residue protein sequence, read N- to C-terminus: Acyl-[acyl-carrier-protein]--UDP-N-acetylglucosamine O-acyltransferase (258 aa).

Belongs to the transferase hexapeptide repeat family. LpxA subfamily. As to quaternary structure, homotrimer.

It is found in the cytoplasm. The enzyme catalyses a (3R)-hydroxyacyl-[ACP] + UDP-N-acetyl-alpha-D-glucosamine = a UDP-3-O-[(3R)-3-hydroxyacyl]-N-acetyl-alpha-D-glucosamine + holo-[ACP]. It functions in the pathway glycolipid biosynthesis; lipid IV(A) biosynthesis; lipid IV(A) from (3R)-3-hydroxytetradecanoyl-[acyl-carrier-protein] and UDP-N-acetyl-alpha-D-glucosamine: step 1/6. Involved in the biosynthesis of lipid A, a phosphorylated glycolipid that anchors the lipopolysaccharide to the outer membrane of the cell. The chain is Acyl-[acyl-carrier-protein]--UDP-N-acetylglucosamine O-acyltransferase from Neisseria meningitidis serogroup B (strain ATCC BAA-335 / MC58).